A 205-amino-acid polypeptide reads, in one-letter code: Disintegrin-like leberagin-C (205 aa).

One can recognise a Disintegrin domain in the interval 4 to 90 (PPVCGNELLE…DCPIDRFHRN (87 aa)). Cystine bridges form between Cys7/Cys26, Cys18/Cys36, Cys62/Cys82, Cys69/Cys94, Cys101/Cys106, Cys113/Cys128, Cys151/Cys158, Cys163/Cys171, and Cys193/Cys198. The short motif at 68 to 70 (ECD) is the D/ECD-tripeptide element. N-linked (GlcNAc...) asparagine glycosylation occurs at Asn120.

Belongs to the venom metalloproteinase (M12B) family. P-III subfamily. P-IIIb sub-subfamily. Monomer. In terms of tissue distribution, expressed by the venom gland.

Its subcellular location is the secreted. In terms of biological role, inhibits platelet aggregation induced by thrombin and arachidonic acid with IC(50) of 40 and 50 nM respectively (in rabbit platetelet-rich plasma). It also inhibits the adhesion of melanoma tumor cells on fibrinogen and fibronectin, by interfering with the function of alpha-V/beta-3 (ITGAV/ITGB3) and, to a lesser extent, with alpha-V/beta-6 (ITGAV/ITGB6) and alpha-5/beta-1 (ITGA5/ITGB1) integrins. The sequence is that of Disintegrin-like leberagin-C from Macrovipera lebetina transmediterranea (Blunt-nosed viper).